The sequence spans 106 residues: Small ribosomal subunit protein uS10 (106 aa).

The protein belongs to the universal ribosomal protein uS10 family. In terms of assembly, part of the 30S ribosomal subunit.

Involved in the binding of tRNA to the ribosomes. This Mycoplasma genitalium (strain ATCC 33530 / DSM 19775 / NCTC 10195 / G37) (Mycoplasmoides genitalium) protein is Small ribosomal subunit protein uS10.